A 696-amino-acid chain; its full sequence is Golgi integral membrane protein 4 (696 aa).

Residue glycine 2 is the site of N-myristoyl glycine attachment. Over 2–12 (GNGMCSRKQKR) the chain is Cytoplasmic. A helical; Signal-anchor for type II membrane protein transmembrane segment spans residues 13 to 33 (IFQTLLLLTVVFGFLYGAMLY). The Lumenal portion of the chain corresponds to 34-696 (YELQTQLRKA…AEKSHRRAEM (663 aa)). The stretch at 35–244 (ELQTQLRKAE…KQLKDTLNRI (210 aa)) forms a coiled coil. The interval 38-107 (TQLRKAEAVA…ETLNKGRQDS (70 aa)) is golgi targeting. Residues 80-175 (LEHKKAKEDF…QELSKLKETV (96 aa)) are endosome targeting. Disordered stretches follow at residues 122–145 (KSQHEELKKQHSDLEEEHRKQGED), 244–391 (IPSL…HARA), and 427–696 (LREH…RAEM). Residues 123-145 (SQHEELKKQHSDLEEEHRKQGED) show a composition bias toward basic and acidic residues. The interval 176 to 248 (YNLREENRQL…DTLNRIPSLR (73 aa)) is golgi targeting. Residues 254-269 (EQQNVTQVAHSPQGYN) show a composition bias toward polar residues. Asparagine 257 carries N-linked (GlcNAc...) asparagine glycosylation. Composition is skewed to basic and acidic residues over residues 271–281 (AREKPTREVQE), 298–313 (RAEDTKLYAPTHKEAE), 324–343 (EVERREPEEHQVEEEHRKAL), 355–364 (EHLEEEHDPS), and 370–380 (REWKEQHEQRE). Phosphoserine is present on serine 364. A compositionally biased stretch (low complexity) spans 436–453 (QQRLQGHLLRQQEQQQQQ). Composition is skewed to basic and acidic residues over residues 464–476 (AELEEGRPQHQEQ) and 505–545 (AYER…RAAV). At serine 538 the chain carries Phosphoserine. Residues 604–626 (QQEDNVDEQYQEEAEEEVQEDLT) show a composition bias toward acidic residues. Phosphotyrosine is present on tyrosine 613. A Phosphothreonine modification is found at threonine 626. Composition is skewed to basic and acidic residues over residues 627 to 638 (EEKKRELEHNAE) and 661 to 672 (RDDNRPKGREEH). A Phosphotyrosine modification is found at tyrosine 673. Over residues 673–683 (YEEEEEEEEDG) the composition is skewed to acidic residues.

This sequence belongs to the GOLIM4 family. Phosphorylated probably by c-AMP-dependent kinases in its lumenal part. In terms of processing, O-glycosylated; modified by sialic acid residues. Post-translationally, N-glycosylated; N-glycans are probably of the complex type and modified by sialic acid residues.

It is found in the golgi apparatus. The protein resides in the golgi stack membrane. The protein localises to the endosome membrane. It localises to the membrane. In terms of biological role, plays a role in endosome to Golgi protein trafficking; mediates protein transport along the late endosome-bypass pathway from the early endosome to the Golgi. In Homo sapiens (Human), this protein is Golgi integral membrane protein 4 (GOLIM4).